Reading from the N-terminus, the 653-residue chain is Fructose-1,6-bisphosphatase class 3 (653 aa).

This sequence belongs to the FBPase class 3 family. Mn(2+) serves as cofactor.

The catalysed reaction is beta-D-fructose 1,6-bisphosphate + H2O = beta-D-fructose 6-phosphate + phosphate. It participates in carbohydrate biosynthesis; gluconeogenesis. This is Fructose-1,6-bisphosphatase class 3 from Listeria monocytogenes serotype 4b (strain CLIP80459).